The primary structure comprises 266 residues: Hemin import ATP-binding protein HmuV (266 aa).

The ABC transporter domain maps to leucine 12–aspartate 248. Glycine 44 to serine 51 is a binding site for ATP.

The protein belongs to the ABC transporter superfamily. Heme (hemin) importer (TC 3.A.1.14.5) family. In terms of assembly, the complex is composed of two ATP-binding proteins (HmuV), two transmembrane proteins (HmuU) and a solute-binding protein (HmuT).

It localises to the cell inner membrane. In terms of biological role, part of the ABC transporter complex HmuTUV involved in hemin import. Responsible for energy coupling to the transport system. In Yersinia pestis bv. Antiqua (strain Antiqua), this protein is Hemin import ATP-binding protein HmuV.